The primary structure comprises 354 residues: MALISMRQMLDHAAEFGYGVPAFNVNNLEQMRAIMEAADKTDSPVIVQASAGARKYAGAPFLRHLILAAIEEFPHIPVVMHQDHGTSPDVCQRSIQLGFSSVMMDGSLREDGKTPADYDYNVRVTQQTVAFAHACGVSVEGELGCLGSLETGMAGEEDGVGAEGVLDHSQLLTDPEEAADFVKKTKVDALAIAIGTSHGAYKFTKPPTGDTLSIQRIKEIHARIPDTHLVMHGSSSVPQDWLAIINEYGGEIKETYGVPVEEIVEGIKYGVRKVNIDTDLRLASTGAIRRFLAQNPSEFDPRKYFSKTVEAMRDICIARYEAFGTAGNASKIKPISLEGMFQRYARGELDPKVN.

Serine 50 provides a ligand contact to D-glyceraldehyde 3-phosphate. Aspartate 83 functions as the Proton donor in the catalytic mechanism. Zn(2+)-binding residues include histidine 84, aspartate 105, glutamate 142, and histidine 198. Glycine 199 serves as a coordination point for dihydroxyacetone phosphate. Histidine 232 contacts Zn(2+). Residues 233 to 235 (GSS) and 275 to 278 (NIDT) each bind dihydroxyacetone phosphate.

The protein belongs to the class II fructose-bisphosphate aldolase family. Zn(2+) is required as a cofactor.

The catalysed reaction is beta-D-fructose 1,6-bisphosphate = D-glyceraldehyde 3-phosphate + dihydroxyacetone phosphate. It functions in the pathway carbohydrate degradation; glycolysis; D-glyceraldehyde 3-phosphate and glycerone phosphate from D-glucose: step 4/4. Its function is as follows. Catalyzes the aldol condensation of dihydroxyacetone phosphate (DHAP or glycerone-phosphate) with glyceraldehyde 3-phosphate (G3P) to form fructose 1,6-bisphosphate (FBP) in gluconeogenesis and the reverse reaction in glycolysis. This chain is Fructose-bisphosphate aldolase (fba), found in Pseudomonas aeruginosa (strain ATCC 15692 / DSM 22644 / CIP 104116 / JCM 14847 / LMG 12228 / 1C / PRS 101 / PAO1).